Consider the following 610-residue polypeptide: Elongation factor 4 (610 aa).

Residues 11–193 (ENIRNFSIIA…QIVEKVPAPS (183 aa)) enclose the tr-type G domain. GTP contacts are provided by residues 23–28 (DHGKST) and 140–143 (NKID).

This sequence belongs to the TRAFAC class translation factor GTPase superfamily. Classic translation factor GTPase family. LepA subfamily.

The protein resides in the cell membrane. It catalyses the reaction GTP + H2O = GDP + phosphate + H(+). Functionally, required for accurate and efficient protein synthesis under certain stress conditions. May act as a fidelity factor of the translation reaction, by catalyzing a one-codon backward translocation of tRNAs on improperly translocated ribosomes. Back-translocation proceeds from a post-translocation (POST) complex to a pre-translocation (PRE) complex, thus giving elongation factor G a second chance to translocate the tRNAs correctly. Binds to ribosomes in a GTP-dependent manner. The chain is Elongation factor 4 from Streptococcus equi subsp. zooepidemicus (strain H70).